The sequence spans 23 residues: Superoxide dismutase [Mn], mitochondrial (23 aa).

This sequence belongs to the iron/manganese superoxide dismutase family. In terms of assembly, homotetramer. The cofactor is Mn(2+).

It is found in the mitochondrion matrix. It carries out the reaction 2 superoxide + 2 H(+) = H2O2 + O2. Functionally, destroys superoxide anion radicals which are normally produced within the cells and which are toxic to biological systems. The chain is Superoxide dismutase [Mn], mitochondrial from Aquarana catesbeiana (American bullfrog).